Reading from the N-terminus, the 451-residue chain is tRNA-2-methylthio-N(6)-dimethylallyladenosine synthase (451 aa).

Residues 2-119 form the MTTase N-terminal domain; sequence QNLYIKTYGC…LPDLLDACLA (118 aa). C11, C48, C82, C157, C161, and C164 together coordinate [4Fe-4S] cluster. Residues 143-377 enclose the Radical SAM core domain; that stretch reads GRDGATAFVT…RINGLAQGYA (235 aa). Residues 378–441 enclose the TRAM domain; it reads QALVGTQQAV…PNSLRGRAAL (64 aa).

This sequence belongs to the methylthiotransferase family. MiaB subfamily. In terms of assembly, monomer. [4Fe-4S] cluster is required as a cofactor.

Its subcellular location is the cytoplasm. The catalysed reaction is N(6)-dimethylallyladenosine(37) in tRNA + (sulfur carrier)-SH + AH2 + 2 S-adenosyl-L-methionine = 2-methylsulfanyl-N(6)-dimethylallyladenosine(37) in tRNA + (sulfur carrier)-H + 5'-deoxyadenosine + L-methionine + A + S-adenosyl-L-homocysteine + 2 H(+). Catalyzes the methylthiolation of N6-(dimethylallyl)adenosine (i(6)A), leading to the formation of 2-methylthio-N6-(dimethylallyl)adenosine (ms(2)i(6)A) at position 37 in tRNAs that read codons beginning with uridine. The chain is tRNA-2-methylthio-N(6)-dimethylallyladenosine synthase from Acidithiobacillus ferrooxidans (strain ATCC 23270 / DSM 14882 / CIP 104768 / NCIMB 8455) (Ferrobacillus ferrooxidans (strain ATCC 23270)).